The sequence spans 98 residues: Co-chaperonin GroES (98 aa).

Belongs to the GroES chaperonin family. Heptamer of 7 subunits arranged in a ring. Interacts with the chaperonin GroEL.

It is found in the cytoplasm. Its function is as follows. Together with the chaperonin GroEL, plays an essential role in assisting protein folding. The GroEL-GroES system forms a nano-cage that allows encapsulation of the non-native substrate proteins and provides a physical environment optimized to promote and accelerate protein folding. GroES binds to the apical surface of the GroEL ring, thereby capping the opening of the GroEL channel. The sequence is that of Co-chaperonin GroES from Coprothermobacter proteolyticus (strain ATCC 35245 / DSM 5265 / OCM 4 / BT).